The sequence spans 264 residues: NADH-quinone oxidoreductase subunit I 2 (264 aa).

4Fe-4S ferredoxin-type domains lie at 57–86 (GFLE…ISLE) and 98–127 (TQFD…HTRE). [4Fe-4S] cluster-binding residues include Cys66, Cys69, Cys72, Cys76, Cys107, Cys110, Cys113, and Cys117. The disordered stretch occupies residues 183–264 (APQFLPPEPP…AAPAANPESK (82 aa)). Residues 197–264 (AKPAAKAAPA…AAPAANPESK (68 aa)) are compositionally biased toward low complexity.

It belongs to the complex I 23 kDa subunit family. In terms of assembly, NDH-1 is composed of 14 different subunits. Subunits NuoA, H, J, K, L, M, N constitute the membrane sector of the complex. The cofactor is [4Fe-4S] cluster.

It localises to the cell inner membrane. It carries out the reaction a quinone + NADH + 5 H(+)(in) = a quinol + NAD(+) + 4 H(+)(out). NDH-1 shuttles electrons from NADH, via FMN and iron-sulfur (Fe-S) centers, to quinones in the respiratory chain. The immediate electron acceptor for the enzyme in this species is believed to be ubiquinone. Couples the redox reaction to proton translocation (for every two electrons transferred, four hydrogen ions are translocated across the cytoplasmic membrane), and thus conserves the redox energy in a proton gradient. The protein is NADH-quinone oxidoreductase subunit I 2 of Anaeromyxobacter dehalogenans (strain 2CP-C).